The chain runs to 210 residues: Protein DrgA (210 aa).

This sequence belongs to the nitroreductase family. FMN is required as a cofactor.

In terms of biological role, controls resistance to the herbicide Dinoseb and metronidazole. Involved in detoxification of Dinoseb via the reduction of the nitro group(s) and this process is accompanied by the formation of toxic superoxide anions. The protein is Protein DrgA (drgA) of Synechocystis sp. (strain ATCC 27184 / PCC 6803 / Kazusa).